The following is a 389-amino-acid chain: Sterol methyltransferase-like 1 (389 aa).

A helical transmembrane segment spans residues 25-45 (IAAGVTAAVVIGGYIWIITEL).

The protein belongs to the class I-like SAM-binding methyltransferase superfamily. Erg6/SMT family.

It localises to the microsome membrane. Functionally, unable to convert squalene, botryococcene, cycloartenol, zymosterol or lanosterol to mono-, di-, tri- or tetramethylated derivatives. This Botryococcus braunii (Green alga) protein is Sterol methyltransferase-like 1 (SMT-1).